The primary structure comprises 98 residues: NADH-ubiquinone oxidoreductase chain 4L (98 aa).

3 helical membrane-spanning segments follow: residues 1 to 21 (MIPTYMNIMLAFTISLLGMLT), 29 to 49 (SLLCLEGMMMSLFIMTTLIAL), and 61 to 81 (IILLVFAACEAAVGLALLVSI).

The protein belongs to the complex I subunit 4L family. Core subunit of respiratory chain NADH dehydrogenase (Complex I) which is composed of 45 different subunits.

The protein resides in the mitochondrion inner membrane. It catalyses the reaction a ubiquinone + NADH + 5 H(+)(in) = a ubiquinol + NAD(+) + 4 H(+)(out). Functionally, core subunit of the mitochondrial membrane respiratory chain NADH dehydrogenase (Complex I) which catalyzes electron transfer from NADH through the respiratory chain, using ubiquinone as an electron acceptor. Part of the enzyme membrane arm which is embedded in the lipid bilayer and involved in proton translocation. In Macaca ochreata subsp. brunnescens (Muna-buton macaque), this protein is NADH-ubiquinone oxidoreductase chain 4L (MT-ND4L).